The following is a 121-amino-acid chain: MLNRKDQRLRRSKQTRVRIALQKVARLTVFRSNLHIYASVISDDGSKVLASASTAEKEVRARLGAAGKGGNTEAAALIGKRIAERAKAAGIESVAFDRGGFAYHGRVKALAEAAREAGLQF.

This sequence belongs to the universal ribosomal protein uL18 family. Part of the 50S ribosomal subunit; part of the 5S rRNA/L5/L18/L25 subcomplex. Contacts the 5S and 23S rRNAs.

This is one of the proteins that bind and probably mediate the attachment of the 5S RNA into the large ribosomal subunit, where it forms part of the central protuberance. This Methylibium petroleiphilum (strain ATCC BAA-1232 / LMG 22953 / PM1) protein is Large ribosomal subunit protein uL18.